Consider the following 131-residue polypeptide: Small ribosomal subunit protein uS8 (131 aa).

It belongs to the universal ribosomal protein uS8 family. Part of the 30S ribosomal subunit. Contacts proteins S5 and S12.

One of the primary rRNA binding proteins, it binds directly to 16S rRNA central domain where it helps coordinate assembly of the platform of the 30S subunit. The polypeptide is Small ribosomal subunit protein uS8 (Chlorobium luteolum (strain DSM 273 / BCRC 81028 / 2530) (Pelodictyon luteolum)).